The chain runs to 738 residues: Polyribonucleotide nucleotidyltransferase (738 aa).

Residues Asp-528 and Asp-534 each contribute to the Mg(2+) site. The KH domain maps to 594-653; that stretch reads PRVVRVKIPVQKIGELIGPKGKVINSIQDETGAEISIEDDGTVYIGSSQADSSEKAVAMV. Positions 665 to 737 constitute an S1 motif domain; it reads GSQFLGTVVK…DRGKLCLVAV (73 aa).

The protein belongs to the polyribonucleotide nucleotidyltransferase family. Mg(2+) is required as a cofactor.

Its subcellular location is the cytoplasm. It carries out the reaction RNA(n+1) + phosphate = RNA(n) + a ribonucleoside 5'-diphosphate. Its function is as follows. Involved in mRNA degradation. Catalyzes the phosphorolysis of single-stranded polyribonucleotides processively in the 3'- to 5'-direction. In Tropheryma whipplei (strain Twist) (Whipple's bacillus), this protein is Polyribonucleotide nucleotidyltransferase.